The sequence spans 265 residues: Putative carbamate hydrolase RutD (265 aa).

An AB hydrolase-1 domain is found at 21 to 123 (PILLSAGMGG…TIVNGWARAD (103 aa)).

It belongs to the AB hydrolase superfamily. Hydrolase RutD family.

The catalysed reaction is carbamate + 2 H(+) = NH4(+) + CO2. Its function is as follows. Involved in pyrimidine catabolism. May facilitate the hydrolysis of carbamate, a reaction that can also occur spontaneously. The protein is Putative carbamate hydrolase RutD of Azorhizobium caulinodans (strain ATCC 43989 / DSM 5975 / JCM 20966 / LMG 6465 / NBRC 14845 / NCIMB 13405 / ORS 571).